The sequence spans 354 residues: Type II secretion system protein K (354 aa).

Positions methionine 1–glycine 7 are cleaved as a propeptide — leader sequence. The chain crosses the membrane as a helical span at residues valine 8–threonine 28. Residues glutamate 29–proline 354 are Periplasmic-facing. The segment at asparagine 114–glutamate 151 is disordered. Residues asparagine 118–serine 141 show a composition bias toward low complexity.

It belongs to the GSP K family. Type II secretion is composed of four main components: the outer membrane complex, the inner membrane complex, the cytoplasmic secretion ATPase and the periplasm-spanning pseudopilus. Interacts with core component OutG. Cleaved by prepilin peptidase.

Its subcellular location is the cell inner membrane. Component of the type II secretion system required for the energy-dependent secretion of extracellular factors such as proteases and toxins from the periplasm. Plays a role in pseudopilus assembly and seems to control its length. Interacts with the pseudopilus tip complex that is critical for the recognition and binding of secretion substrates. This Dickeya chrysanthemi (Pectobacterium chrysanthemi) protein is Type II secretion system protein K (outK).